A 457-amino-acid chain; its full sequence is 11S globulin seed storage protein Ana o 2.0101 (457 aa).

A signal peptide spans 1 to 14 (LSVCFLILFHGCLA). The segment at 15 to 29 (SRQEWQQQDECQIDR) is igE-binding. Intrachain disulfides connect C25/C58 and C101/C278. 2 conformational epitope; mouse monoclonal antibody (mAb) 2B5-binding regions span residues 29–37 (RLDALEPDN) and 31–48 (DALE…TVEA). Residues 30–220 (LDALEPDNRV…AFQVDERLIK (191 aa)) form the Cupin type-1 1 domain. Binds goat polyclonal antibodies (pAbs) stretches follow at residues 32 to 45 (ALEP…EAGT) and 55 to 86 (QFRC…QLIY). A mouse monoclonal antibody (mAb) 2B5-binding region spans residues 34–57 (EPDNRVEYEAGTVEAWDPNHEQFR). Residues 41–55 (YEAGTVEAWDPNHEQ) form a mouse monoclonal antibody (mAb) 4H9-binding region. Positions 105-119 (YQAPQQGRQQGQSGR) are igE-binding. Residues 215-239 (DERLIKQLKSEDNRGGIVKVKDDEL) form a binds goat polyclonal antibodies (pAbs) region. The segment at 233 to 252 (KVKDDELRVIRPSRSQSERG) is CD4(+) T cell-reactive epitope. Residues 243–270 (RPSRSQSERGSESEEESEDEKRRWGQRD) form a disordered region. The segment covering 261 to 270 (DEKRRWGQRD) has biased composition (basic and acidic residues). A linear epitope; mouse monoclonal antibody (mAb) 1F5-binding region spans residues 265–289 (RWGQRDNGIEETICTMRLKENINDP). The short motif at 271 to 276 (NGIEET) is the NGXEET; peptidase recognition motif element. One can recognise a Cupin type-1 2 domain in the interval 284–433 (ENINDPARAD…AFQISREDAR (150 aa)). 5 CD4(+) T cell-reactive epitope regions span residues 289–308 (PARA…LNSL), 297–316 (PEVG…LKWL), 321–340 (EKGV…LNSH), 329–348 (ALVL…GCKG), and 377–396 (QNFA…ISFK). The tract at residues 395-416 (FKTNDRAMTSPLAGRTSVLGGM) is binds goat polyclonal antibodies (pAbs), but buried in the 3D-structure model.

Belongs to the 11S seed storage protein (globulins) family. Homotrimer. Hexamer. Each subunit is composed of an acidic and a basic chain derived from a single precursor and linked by a disulfide bond. Proteolytically processed from a single precursor to produce an acidic and a basic chain that are linked by a disulfide bond. Not glycosylated. As to expression, expressed in seed (at protein level). Expressed in the juice of the cashew apple (at protein level).

Its function is as follows. Seed storage protein. In Anacardium occidentale (Cashew), this protein is 11S globulin seed storage protein Ana o 2.0101.